Here is a 372-residue protein sequence, read N- to C-terminus: NAD(P)H-quinone oxidoreductase subunit 1 (372 aa).

The next 9 helical transmembrane spans lie at threonine 27 to valine 47, proline 65 to phenylalanine 85, tryptophan 97 to valine 117, leucine 128 to methionine 148, leucine 176 to valine 196, isoleucine 204 to leucine 224, tyrosine 249 to serine 269, glycine 308 to leucine 328, and valine 351 to glycine 371.

This sequence belongs to the complex I subunit 1 family. As to quaternary structure, NDH-1 is composed of at least 11 different subunits.

It is found in the cellular thylakoid membrane. The enzyme catalyses a plastoquinone + NADH + (n+1) H(+)(in) = a plastoquinol + NAD(+) + n H(+)(out). It catalyses the reaction a plastoquinone + NADPH + (n+1) H(+)(in) = a plastoquinol + NADP(+) + n H(+)(out). Functionally, NDH-1 shuttles electrons from an unknown electron donor, via FMN and iron-sulfur (Fe-S) centers, to quinones in the respiratory and/or the photosynthetic chain. The immediate electron acceptor for the enzyme in this species is believed to be plastoquinone. Couples the redox reaction to proton translocation, and thus conserves the redox energy in a proton gradient. This is NAD(P)H-quinone oxidoreductase subunit 1 from Acaryochloris marina (strain MBIC 11017).